Consider the following 356-residue polypeptide: MASTVPSTMKAWQFSSASPTIEANLKLNNNAPLPDGANNLGPDQVLVKVIAAGLNPVDFKFAEIPWLGRLIVGSPSTPGMDFAGRVVATGPNTKSVAVEDLKPGQLVFGRLDSPSKFGTLAEYTIAPRKGCVAIPPGARVIETACVASVGLTAYQSIVYRLKDHTGKRIFLNGGSGGCGTFGIQIAKQMGCHVTTSCSTPNVDLCRSLGADTVIDYKKTDVIAELKKMQPFDLVVDNVGVPTDLYWAAPSFTNPGAPYVQVGALAVTPGFILGNFFKARWPGWLGGGKRPWEFMHIESNVQDYEQLGRWMQEGKLRAVVDEVFGMQDDGPVKAYQKLRTGRAKGKIIVKIDETWED.

Residues 57-60 (VDFK), 175-178 (SGGC), 198-201 (STPN), tyrosine 216, 261-262 (VG), and 342-343 (AK) contribute to the NADP(+) site.

The protein belongs to the zinc-containing alcohol dehydrogenase family.

FAD-linked oxidoreductase; part of the gene cluster that mediates the biosynthesis of pleosporalin A, ascomycone A, as well as a third cryptic naphthoquinone derived pigment, all responsible for the coloration of conidia. The pathway begins with the biosynthesis of the cyclized heptaketide 3-acetonyl-1,6,8-trihydroxy-2-naphthaldehyde by the NR-PKS pgmA. The C-6 hydroxyl group is further methylated by the O-methyltransferase pgmB to yield fusarubinaldehyde which is in turn oxidized by the cytochrome P450 monooxygenase pgmC at C-9. The C-1 hydroxyl group is then methylated spontaneously. Although pgmE, pgmD and pgmH are essential for the production of pleosporalin A, it is not the case for the 2 other final products and it remains difficult to assign a specific function to each enzyme. PgmF and pgmG seem not to be involved in pigment biosynthesis although they were regulated by the cluster-specific transcription factor pgmR. The protein is Trans-enoyl reductase pgmF of Aspergillus terreus.